Here is a 710-residue protein sequence, read N- to C-terminus: Polyribonucleotide nucleotidyltransferase (710 aa).

Residues Asp-491 and Asp-497 each contribute to the Mg(2+) site. One can recognise a KH domain in the interval 559–618 (PRLITIKINPEKIRDVIGKGGAVIRALTEETGTQIDISDEGVVTIASVDAAAGQEAKRRI). An S1 motif domain is found at 628-696 (GKVYEGTVLK…DRGRLKLSMK (69 aa)).

The protein belongs to the polyribonucleotide nucleotidyltransferase family. Requires Mg(2+) as cofactor.

It is found in the cytoplasm. It carries out the reaction RNA(n+1) + phosphate = RNA(n) + a ribonucleoside 5'-diphosphate. Involved in mRNA degradation. Catalyzes the phosphorolysis of single-stranded polyribonucleotides processively in the 3'- to 5'-direction. The chain is Polyribonucleotide nucleotidyltransferase from Herminiimonas arsenicoxydans.